The primary structure comprises 462 residues: MQKQQTLKDKFCLQGKGLHTGLDIHITFCPAPEESGYKIKRVDLEGQPVIDAIADNVHSTRRGTVLKKGEVSVSTIEHAMAALYALGVDNCLIEVDAPEFPILDGSAEPYVSEIKRVGLVEQETPRDYYIIKKRMEVSDPESNSKLILLPDDEFTVDVHIAFPSKVLSNQFASLETLSDFEEQIAGARTFVFVREVQMLLEANLIKGGDLDNALVIYDEPLAQDRLDALSDMMGVERKQVNELGYINNKPLIYDNEPARHKLLDVLGDLALIGKYIRGRIIATCPGHSINNKMARLIRKEIKQNEAQAPVYNPNKEPIMDINRIKELLPHRYPFLLVDKIIEVGPDYIVGVKSVSGNEPFFPGHFPGEPVMPGVLQVEAMAQVGGLLVLNTLTEPSSYSTYFLMIDKVKFRRKVVPGDTLVFKLRMISEIRRGVANMRGLAFVGEQLACEAEFMAQIIQNKE.

The segment at Met1 to Lys302 is UDP-3-O-acyl-N-acetylglucosamine deacetylase. The Zn(2+) site is built by His78, His260, and Asp264. His287 serves as the catalytic Proton donor. A 3-hydroxyacyl-[acyl-carrier-protein] dehydratase region spans residues Gln303–Glu462. His364 is a catalytic residue.

In the N-terminal section; belongs to the LpxC family. It in the C-terminal section; belongs to the thioester dehydratase family. Requires Zn(2+) as cofactor.

It localises to the cytoplasm. The catalysed reaction is a UDP-3-O-[(3R)-3-hydroxyacyl]-N-acetyl-alpha-D-glucosamine + H2O = a UDP-3-O-[(3R)-3-hydroxyacyl]-alpha-D-glucosamine + acetate. It carries out the reaction a (3R)-hydroxyacyl-[ACP] = a (2E)-enoyl-[ACP] + H2O. It functions in the pathway glycolipid biosynthesis; lipid IV(A) biosynthesis; lipid IV(A) from (3R)-3-hydroxytetradecanoyl-[acyl-carrier-protein] and UDP-N-acetyl-alpha-D-glucosamine: step 2/6. Catalyzes the hydrolysis of UDP-3-O-myristoyl-N-acetylglucosamine to form UDP-3-O-myristoylglucosamine and acetate, the committed step in lipid A biosynthesis. In terms of biological role, involved in unsaturated fatty acids biosynthesis. Catalyzes the dehydration of short chain beta-hydroxyacyl-ACPs and long chain saturated and unsaturated beta-hydroxyacyl-ACPs. The chain is Bifunctional enzyme LpxC/FabZ (lpxC/fabZ) from Porphyromonas gingivalis (strain ATCC BAA-308 / W83).